The chain runs to 693 residues: F-box protein MAX2 (693 aa).

Positions 3–50 (STTLSDLPDVILSTISSLVSDSRARNSLSLVSHKFLALERSTRSHLTI) constitute an F-box domain. 14 LRR repeats span residues 9–34 (LPDV…SLVS), 49–74 (TIRG…DLSF), 75–100 (LSPW…RLKF), 110–135 (VYTR…KLLR), 141–167 (SQIP…DLSN), 168–196 (FYHW…DLLT), 200–225 (TEGY…RVAC), 232–257 (FEFV…HMVD), 274–299 (DSAV…VLDV), 302–327 (DVKH…KLGQ), 332–356 (CSAT…SIKN), 357–382 (SGDL…EIQG), 383–409 (CENV…RISC), and 410–436 (CKNL…HIDC). Residues 445–465 (EVEGRVETSEADHEEEDDGYE) are disordered. 4 LRR repeats span residues 480-505 (CSTS…SLWI), 508-532 (GEFL…RIKI), 541-565 (RPAE…QLDC), and 608-637 (DRDV…FIHG).

As to quaternary structure, part of a SCF (SKP1-cullin-F-box) protein ligase complex. Interacts with SKP1A/ASK1. Interacts with CUL1. Interacts with SMXL6, SMXL7 and SMXL8. Interacts with D14. Forms a complex with D14 and SKP1A/ASK1 in presence of strigolactone. Expressed in the vasculature of growing leaves and roots, rosette axillary bud, flowers, siliques, funiculi and stems.

It is found in the nucleus. Its pathway is protein modification; protein ubiquitination. Component of SCF(ASK-cullin-F-box) E3 ubiquitin ligase complexes, which may mediate the ubiquitination and subsequent proteasomal degradation of target proteins. Promotes the senescence. Is necessary for responses to strigolactones and karrikins. Contributes to the selective repression of axillary shoots and moderates the branching by regulating negatively the auxin transport in primary stems, in an AXR1-independent manner. Required for the progression of leaf senescence mediated by methyl jasmonate. Required at each node to suppress axillary bud growth. The sequence is that of F-box protein MAX2 from Arabidopsis thaliana (Mouse-ear cress).